The following is a 1035-amino-acid chain: MREFSEIIKARDWENQEVTHQHVVQAHAPLHAFHSKQAALDNQASEFQQLLNGQWRFQLFAKPEAVPNHCINIDFDDSAWSDITVPSNWQLQGYDKPIYTNVKYPFADNPPFVPADNPTGVYRLNFTLPTAWKERKNTVIFDGVNSAFHLWCNGIWVGYSQDSRLPAEFDLSCHLQAGDNQLTVMVLRWSDGSYLEDQDMWWLSGIFRDVCLLSKPLISIRDITVSTELDACFNHGSINVVTQLSEQSSQYTAQVQLFDAQLQPVTKLVGAPFGERMIDEKGPANDRAEHKIAVPSPHKWSSESPYLYRVVISLVDNEGQVVDSEAYQVGFRVVEMSNGQLKLNGEALLIRGVNRHEHHPEKGHAISYEDMLVDIKLLKQNNFNAVRTAHYPNHPLWYELCDQYGLYVVDEANLETHGQFPMSRLSNDLSWLNAYMRRMTRMVERDKNHPSIIIWSLGNESGLGHHHHAMYQWTKRRDPTRPVQYEGGGADTAATDIIVPMYARVNKDITLPNAPDVVPKMAIKKWLSMPNEQRPLILCEYAHAMGNSLGSFDKYWQAFREYPRLQGGFIWDWVDQGLTKIDDNGDNYWAYGGDFGDQINDRQFCINGLVFPDRSLHPTVYEAKKAQQFYQFSLVDGDQLKVKIDSENLFIESMDETLCWSVTEAGYVIASGEMELHVTAQSSKILTLLESYPEQKIGCDYFLNIEIVLNKDKPWATKGFVVATEQVALASIAQLTNVPLIESGAPRLSEDKNKITVAGTGSGAEFELEIDKQQGVISQWLVRGENKILQGPKDNFFRAPLDNDIGTSEADCIDPNAWVTQWDTAGIANLVPHCIAIEAVTLARSVLVKVEFGHYVENKLLISSHWQYTINNQGEVQIDVNVNLAKSLSPLPRIGLELILPDSEKPVNWFGRGPHENYPDRILSAHIARHCCSIEEMHTPYIFPSENGLRCDVKDAIVGDLTVSGDFHLAVSRYSQMNIAQAKHVNDLINDHQLYVRLDAFHMGVGGDDSWSPSVHDEFLLNKEHYHYQMILAFN.

Residues Asn101 and Asp199 each contribute to the substrate site. Asp199 is a Na(+) binding site. Residues Glu415, His417, and Glu460 each contribute to the Mg(2+) site. Residues Glu460 and 540–543 each bind substrate; that span reads EYAH. Glu460 acts as the Proton donor in catalysis. Catalysis depends on Glu540, which acts as the Nucleophile. Mg(2+) is bound at residue Asn600. Na(+) is bound by residues Phe604 and Asn607. The substrate site is built by Asn607 and Trp1011.

Belongs to the glycosyl hydrolase 2 family. In terms of assembly, homotetramer. Requires Mg(2+) as cofactor. Na(+) serves as cofactor.

It carries out the reaction Hydrolysis of terminal non-reducing beta-D-galactose residues in beta-D-galactosides.. The protein is Beta-galactosidase of Psychromonas ingrahamii (strain DSM 17664 / CCUG 51855 / 37).